The chain runs to 138 residues: MAEVQQLRVQEAVDAMVKSVERENIRKMQGLMFRCSANCCEDTQASMQQVHQCIERCHAPLAQAQALVTSELERFQDRLARCTMHCNDKAKDSMDAGTKELQVKRQLDSCVTKCVDDHMHLIPTMTKKMKESLSSIGK.

A2 carries the post-translational modification N-acetylalanine. 2 positions are modified to phosphothreonine: T124 and T126.

It belongs to the FAM136 family.

The polypeptide is Protein FAM136A (Fam136a) (Mus musculus (Mouse)).